Consider the following 948-residue polypeptide: Valine--tRNA ligase (948 aa).

The 'HIGH' region signature appears at 40-50 (PNVTGSLHMGH). The 'KMSKS' region motif lies at 551-555 (KMSKS). Lys554 contacts ATP. Residues 879–945 (LIDKGAELAR…GKLAEQHARI (67 aa)) adopt a coiled-coil conformation.

The protein belongs to the class-I aminoacyl-tRNA synthetase family. ValS type 1 subfamily. In terms of assembly, monomer.

The protein resides in the cytoplasm. It catalyses the reaction tRNA(Val) + L-valine + ATP = L-valyl-tRNA(Val) + AMP + diphosphate. Functionally, catalyzes the attachment of valine to tRNA(Val). As ValRS can inadvertently accommodate and process structurally similar amino acids such as threonine, to avoid such errors, it has a 'posttransfer' editing activity that hydrolyzes mischarged Thr-tRNA(Val) in a tRNA-dependent manner. This chain is Valine--tRNA ligase, found in Pseudomonas syringae pv. tomato (strain ATCC BAA-871 / DC3000).